Consider the following 425-residue polypeptide: Queuine tRNA-ribosyltransferase accessory subunit 2 (425 aa).

Residues 302–323 (QNGAQDLEKNSPEEDQEEEVVK) form a disordered region. Zn(2+) contacts are provided by Cys-351, Cys-353, Cys-356, and His-382.

It belongs to the queuine tRNA-ribosyltransferase family. QTRT2 subfamily. In terms of assembly, heterodimer of a catalytic subunit QTRT1 and an accessory subunit QTRT2. Zn(2+) serves as cofactor.

Its subcellular location is the cytoplasm. The protein localises to the mitochondrion outer membrane. In terms of biological role, non-catalytic subunit of the queuine tRNA-ribosyltransferase (TGT) that catalyzes the base-exchange of a guanine (G) residue with queuine (Q) at position 34 (anticodon wobble position) in tRNAs with GU(N) anticodons (tRNA-Asp, -Asn, -His and -Tyr), resulting in the hypermodified nucleoside queuosine (7-(((4,5-cis-dihydroxy-2-cyclopenten-1-yl)amino)methyl)-7-deazaguanosine). The protein is Queuine tRNA-ribosyltransferase accessory subunit 2 of Gallus gallus (Chicken).